A 96-amino-acid polypeptide reads, in one-letter code: Co-chaperonin GroES (96 aa).

The protein belongs to the GroES chaperonin family. In terms of assembly, heptamer of 7 subunits arranged in a ring. Interacts with the chaperonin GroEL.

The protein resides in the cytoplasm. Functionally, together with the chaperonin GroEL, plays an essential role in assisting protein folding. The GroEL-GroES system forms a nano-cage that allows encapsulation of the non-native substrate proteins and provides a physical environment optimized to promote and accelerate protein folding. GroES binds to the apical surface of the GroEL ring, thereby capping the opening of the GroEL channel. The polypeptide is Co-chaperonin GroES (Citrifermentans bemidjiense (strain ATCC BAA-1014 / DSM 16622 / JCM 12645 / Bem) (Geobacter bemidjiensis)).